The following is a 623-amino-acid chain: Quinoprotein ethanol dehydrogenase (623 aa).

The first 34 residues, 1–34 (MTTRTSPAPAGLLRPSLHCLAFAVALGSAGAALA), serve as a signal peptide directing secretion. Ca(2+) is bound by residues aspartate 45, threonine 48, and aspartate 51. Residue glutamate 95 participates in pyrroloquinoline quinone binding. Cysteine 139 and cysteine 140 are joined by a disulfide. Pyrroloquinoline quinone contacts are provided by residues arginine 145, threonine 189, and 207 to 209 (HGS). Glutamate 213 lines the Ca(2+) pocket. Positions 244–281 (LNGKDSTVTGDVKAPSWPDDRNSPTGKVESWSHGGGAP) are disordered. 2 residues coordinate Ca(2+): asparagine 300 and aspartate 350. The Proton acceptor role is filled by aspartate 350. Arginine 378 is a pyrroloquinoline quinone binding site. The disordered stretch occupies residues 413–434 (GRPVEREGQRPPLPEPGQKHGK). 2 residues coordinate pyrroloquinoline quinone: tryptophan 523 and alanine 587.

This sequence belongs to the bacterial PQQ dehydrogenase family. Homodimer. Interacts with cytochrome c550. Pyrroloquinoline quinone is required as a cofactor. It depends on Ca(2+) as a cofactor. Post-translationally, the disulfide ring formed between the two adjacent cysteine residues Cys-139 and Cys-140 is essential for efficient electron transfer at pH 7 from QEDH to its natural electron acceptor cytochrome c550.

The protein localises to the periplasm. It catalyses the reaction a primary alcohol + 2 Fe(III)-[cytochrome c] = an aldehyde + 2 Fe(II)-[cytochrome c] + 2 H(+). The enzyme catalyses ethanol + 2 Fe(III)-[cytochrome c] = acetaldehyde + 2 Fe(II)-[cytochrome c] + 2 H(+). It carries out the reaction butan-1-ol + 2 Fe(III)-[cytochrome c] = butanal + 2 Fe(II)-[cytochrome c] + 2 H(+). The catalysed reaction is propan-2-ol + 2 Fe(III)-[cytochrome c] = acetone + 2 Fe(II)-[cytochrome c] + 2 H(+). It catalyses the reaction 1-propanol + 2 Fe(III)-[cytochrome c] = propanal + 2 Fe(II)-[cytochrome c] + 2 H(+). The protein operates within alcohol metabolism; ethanol degradation; acetate from ethanol: step 1/2. With respect to regulation, inhibited by cyclopropanone ethylhemiketal. Activated by ammonia (500mM), methylamine (5mM), ethylamine (5mM), octylamine (5mM), ethanolamine (5mM) and 1-amino-2-propanol (5mM), in assays using artificial electron acceptors. Ammonia is not needed for, nor does it stimulate, the ethanol-oxidizing activity when using the natural electron acceptor cytochrome c550. Functionally, catalyzes the oxidation of ethanol and other primary alcohols to the corresponding aldehydes, except methanol, which is a very poor substrate. Uses a specific inducible cytochrome c550, encoded by the adjacent gene in the locus, as electron acceptor. Is a key enzyme of the carbon and energy metabolism during growth of P.aeruginosa on ethanol as the sole carbon and energy source. Is also able to use secondary alcohols as well as aminoalcohols like ethanolamine and 1-amino-2-propanol, and aldehydes as substrates. This is Quinoprotein ethanol dehydrogenase from Pseudomonas aeruginosa (strain ATCC 15692 / DSM 22644 / CIP 104116 / JCM 14847 / LMG 12228 / 1C / PRS 101 / PAO1).